Here is a 150-residue protein sequence, read N- to C-terminus: FAD synthase (150 aa).

Residues 11-12 (TF), 16-19 (HPGH), Asp96, and Tyr124 contribute to the ATP site.

It belongs to the archaeal FAD synthase family. Homodimer. The cofactor is a divalent metal cation.

It catalyses the reaction FMN + ATP + H(+) = FAD + diphosphate. Its pathway is cofactor biosynthesis; FAD biosynthesis; FAD from FMN: step 1/1. Functionally, catalyzes the transfer of the AMP portion of ATP to flavin mononucleotide (FMN) to produce flavin adenine dinucleotide (FAD) coenzyme. The polypeptide is FAD synthase (Methanococcus maripaludis (strain C5 / ATCC BAA-1333)).